A 105-amino-acid polypeptide reads, in one-letter code: Small ribosomal subunit protein uS10 (105 aa).

The protein belongs to the universal ribosomal protein uS10 family. As to quaternary structure, part of the 30S ribosomal subunit.

Involved in the binding of tRNA to the ribosomes. This Synechococcus elongatus (strain ATCC 33912 / PCC 7942 / FACHB-805) (Anacystis nidulans R2) protein is Small ribosomal subunit protein uS10.